Reading from the N-terminus, the 394-residue chain is S-adenosylmethionine synthase 3 (394 aa).

A Mg(2+)-binding site is contributed by E11. H17 is an ATP binding site. Residue E45 coordinates K(+). The L-methionine site is built by E58 and Q101. Residues D169 to K171, S237 to F240, D248, R254 to K255, A271, K275, and K279 each bind ATP. Position 248 (D248) interacts with L-methionine. K279 is a binding site for L-methionine.

This sequence belongs to the AdoMet synthase family. As to quaternary structure, homotetramer. Requires Mn(2+) as cofactor. The cofactor is Mg(2+). Co(2+) serves as cofactor. K(+) is required as a cofactor.

The protein resides in the cytoplasm. The catalysed reaction is L-methionine + ATP + H2O = S-adenosyl-L-methionine + phosphate + diphosphate. It functions in the pathway amino-acid biosynthesis; S-adenosyl-L-methionine biosynthesis; S-adenosyl-L-methionine from L-methionine: step 1/1. Its function is as follows. Catalyzes the formation of S-adenosylmethionine from methionine and ATP. The reaction comprises two steps that are both catalyzed by the same enzyme: formation of S-adenosylmethionine (AdoMet) and triphosphate, and subsequent hydrolysis of the triphosphate. The sequence is that of S-adenosylmethionine synthase 3 (SAM3) from Hordeum vulgare (Barley).